We begin with the raw amino-acid sequence, 341 residues long: Transcription factor ETV7 (341 aa).

The region spanning 33–117 is the PNT domain; it reads NLLGEGGICK…ELLQYIKTQR (85 aa). Positions 224–305 form a DNA-binding region, ETS; sequence RLLWDYVYQL…PGQKLLFRFL (82 aa). A disordered region spans residues 315–341; that stretch reads KHSHLEPLESQEQDRIEFKDKRPEISP.

It belongs to the ETS family. Expressed in hematopoietic tissues.

It localises to the nucleus. Transcriptional repressor; binds to the DNA sequence 5'-CCGGAAGT-3'. Isoform A does not seem to have a repressor activity. Isoform C does not seem to have a repressor activity. The chain is Transcription factor ETV7 (ETV7) from Homo sapiens (Human).